A 397-amino-acid chain; its full sequence is Acetyl-CoA acetyltransferase, cytosolic (397 aa).

N-acetylmethionine is present on methionine 1. The active-site Acyl-thioester intermediate is the cysteine 92. Lysine 200 is modified (N6-acetyllysine). CoA-binding residues include arginine 223 and serine 226. 2 positions are modified to N6-acetyllysine: lysine 233 and lysine 235. Serine 252 contacts CoA. Cysteine 383 (proton donor/acceptor) is an active-site residue.

Belongs to the thiolase-like superfamily. Thiolase family. As to quaternary structure, homotetramer.

It is found in the cytoplasm. The protein resides in the cytosol. The enzyme catalyses 2 acetyl-CoA = acetoacetyl-CoA + CoA. It functions in the pathway lipid metabolism; fatty acid metabolism. In terms of biological role, involved in the biosynthetic pathway of cholesterol. This chain is Acetyl-CoA acetyltransferase, cytosolic (Acat2), found in Mus musculus (Mouse).